Reading from the N-terminus, the 772-residue chain is UDP-N-acetylmuramoyl-L-alanyl-D-glutamate--2,6-diaminopimelate ligase MurE homolog, chloroplastic (772 aa).

The N-terminal 40 residues, Met-1–Val-40, are a transit peptide targeting the chloroplast. Disordered stretches follow at residues Ala-42–Glu-87 and Leu-141–Asp-168. 2 stretches are compositionally biased toward acidic residues: residues Ala-54–Glu-63 and Glu-158–Asp-168. Ser-194 carries the post-translational modification Phosphoserine.

It belongs to the MurCDEF family. MurE subfamily. Component of the plastid-encoded plastid RNA polymerase (PEP) complex. As to expression, expressed in leaves and flowers.

It is found in the plastid. The protein resides in the chloroplast. Involved in chloroplast biogenesis. Required for thylakoid membrane development. Seems to be required for plastid-encoded plastid RNA polymerase (PEP)-dependent gene expression. This Arabidopsis thaliana (Mouse-ear cress) protein is UDP-N-acetylmuramoyl-L-alanyl-D-glutamate--2,6-diaminopimelate ligase MurE homolog, chloroplastic.